Consider the following 535-residue polypeptide: Sodium channel protein Nach (535 aa).

The Cytoplasmic segment spans residues 1–49 (MGHQEELKPEQVDLKVTPFVGYLRRTWSDFCATSSIHGLKYTRDEDTNK). A helical transmembrane segment spans residues 50–70 (IVHLVWLLISVVMFICAVVMA). The Extracellular segment spans residues 71-471 (RTFYMDYRSS…LVSNLGSAFS (401 aa)). N-linked (GlcNAc...) asparagine glycosylation is found at Asn-165, Asn-239, and Asn-367. Residues 472–492 (LFVGMSMLSVVEIIYYFSVIL) form a helical membrane-spanning segment. Topologically, residues 493–535 (RKNYKLECETRSQMLHKKPKFAWPKANDTHSKEQKSVFIIHKS) are cytoplasmic.

It belongs to the amiloride-sensitive sodium channel (TC 1.A.6) family. As to expression, embryonic and larval tracheal system; dorsal trunk (but not at fusion with transverse connective), several branches and terminal cells. Also expressed in adult tracheal system; dorsal trunk, but not at the spiracles.

The protein resides in the membrane. Functionally, part of a complex that plays a role in tracheal liquid clearance. Probable role in sodium transport. The chain is Sodium channel protein Nach (Nach) from Drosophila melanogaster (Fruit fly).